We begin with the raw amino-acid sequence, 301 residues long: uncharacterized protein (301 aa).

The HTH lysR-type domain maps to 1–58 (MDIRHLTYFLEVARLKSFTKASQSLYVSQPTISKMIKNLEEELGIELFYRNGRQVELT). Positions 18-37 (FTKASQSLYVSQPTISKMIK) form a DNA-binding region, H-T-H motif.

The protein belongs to the LysR transcriptional regulatory family.

This is an uncharacterized protein from Bacillus subtilis (strain 168).